The chain runs to 190 residues: NADH-ubiquinone oxidoreductase chain 5 (190 aa).

The next 6 helical transmembrane spans lie at 1 to 21, 68 to 88, 94 to 114, 118 to 138, 146 to 166, and 167 to 187; these read MVISPSTLLVSITLSIICLIV, INILKFLAFLSLINLFLFVGL, NVTFSIWLSNTAANVSLSILF, FIVFLTVALVVTWSIMNFSLL, NVFLLLTIFLLNMLILTCSNS, and LFLLFLGWEGVGFLSFLLIKM.

This sequence belongs to the complex I subunit 5 family.

It is found in the mitochondrion inner membrane. The enzyme catalyses a ubiquinone + NADH + 5 H(+)(in) = a ubiquinol + NAD(+) + 4 H(+)(out). Functionally, core subunit of the mitochondrial membrane respiratory chain NADH dehydrogenase (Complex I) that is believed to belong to the minimal assembly required for catalysis. Complex I functions in the transfer of electrons from NADH to the respiratory chain. The immediate electron acceptor for the enzyme is believed to be ubiquinone. The polypeptide is NADH-ubiquinone oxidoreductase chain 5 (ND5) (Arbacia lixula (Black urchin)).